Here is a 387-residue protein sequence, read N- to C-terminus: MFFLSLIIRNITVVNASGRDEQMDVWMKDGKIAQIAQHIHAQGVDQLEGSGKFLLPGFIDMHIHGSAQMDTMDASDEGLHIHGPITIKEGTTSFLATTMTQSFDWFDRAQRQCGNNFSPKSDEAEVLGLHIEGPFVSKQRAGAQPLDYIVQPDMEVIKKWQALSGQKIKQITLAPEEPNGMAAVQSLSESGVIVSIGHSDATFEQMQEAVQLGASQGTHLYNQMRPFHHRDPGVVGGVLLVDAIKAELIVDFIHMHEGAVEMAYRLKGADGIILITDAMRAKGMPYGEYDLGGQLVHVTESGAHLSNGSLAGSILTMDQAVRNMRQITNCTLEELVKMSSYNAAQQLKLTNKGQLTEGYDADAVIVDEHLLLHQTIKAGRIRVQTNN.

Residues H62, H64, and E132 each coordinate a divalent metal cation. Residue 143-144 (AQ) coordinates substrate. A divalent metal cation is bound by residues H198 and H219. Substrate-binding positions include 222–223 (NQ), R230, and 251–254 (DFIH). A divalent metal cation is bound at residue D277. The active-site Proton donor/acceptor is D277. Residue 310–312 (LAG) participates in substrate binding.

The protein belongs to the metallo-dependent hydrolases superfamily. NagA family. In terms of assembly, homodimer. It depends on a divalent metal cation as a cofactor.

It carries out the reaction N-acetyl-D-glucosamine 6-phosphate + H2O = D-glucosamine 6-phosphate + acetate. It participates in amino-sugar metabolism; N-acetylneuraminate degradation; D-fructose 6-phosphate from N-acetylneuraminate: step 4/5. Involved in the first committed step in the biosynthesis of amino-sugar-nucleotides. Catalyzes the hydrolysis of the N-acetyl group of N-acetylglucosamine-6-phosphate (GlcNAc-6-P) to yield glucosamine 6-phosphate and acetate. In Lysinibacillus sphaericus (Bacillus sphaericus), this protein is N-acetylglucosamine-6-phosphate deacetylase (nagA).